A 33-amino-acid chain; its full sequence is GLLSAVKGVLKGAGKNVAGSLMDKLKCKLFGGC.

Cysteine 27 and cysteine 33 are oxidised to a cystine.

Expressed by the skin glands.

It is found in the secreted. Functionally, antimicrobial peptide. This is Brevinin-2DYa from Rana dybowskii (Dybovsky's frog).